Reading from the N-terminus, the 415-residue chain is uncharacterized protein (415 aa).

This is an uncharacterized protein from Escherichia coli (strain K12).